The following is a 127-amino-acid chain: Large ribosomal subunit protein bL19 (127 aa).

Belongs to the bacterial ribosomal protein bL19 family.

Its function is as follows. This protein is located at the 30S-50S ribosomal subunit interface and may play a role in the structure and function of the aminoacyl-tRNA binding site. The polypeptide is Large ribosomal subunit protein bL19 (Cupriavidus pinatubonensis (strain JMP 134 / LMG 1197) (Cupriavidus necator (strain JMP 134))).